The sequence spans 333 residues: Ribokinase (333 aa).

Substrate-binding positions include 10 to 12, 38 to 42, and E149; these read NYD and GKGLN. Residues N193 and 248–253 contribute to the ATP site; that span reads TLGSRG. Residues D277 and T279 each contribute to the K(+) site. ATP is bound at residue 282–283; sequence GD. Substrate is bound at residue D283. The active-site Proton acceptor is the D283. K(+) contacts are provided by T313, R316, G318, and S322.

It belongs to the carbohydrate kinase PfkB family. Ribokinase subfamily. Homodimer. Mg(2+) is required as a cofactor.

It is found in the cytoplasm. It localises to the nucleus. The enzyme catalyses D-ribose + ATP = D-ribose 5-phosphate + ADP + H(+). It participates in carbohydrate metabolism; D-ribose degradation; D-ribose 5-phosphate from beta-D-ribopyranose: step 2/2. Its activity is regulated as follows. Activated by a monovalent cation that binds near, but not in, the active site. The most likely occupant of the site in vivo is potassium. Ion binding induces a conformational change that may alter substrate affinity. Its function is as follows. Catalyzes the phosphorylation of ribose at O-5 in a reaction requiring ATP and magnesium. The resulting D-ribose-5-phosphate can then be used either for sythesis of nucleotides, histidine, and tryptophan, or as a component of the pentose phosphate pathway. In Saccharomyces cerevisiae (strain ATCC 204508 / S288c) (Baker's yeast), this protein is Ribokinase.